The sequence spans 255 residues: F-box/SPRY domain-containing protein 1 (255 aa).

Positions Asp3–His51 constitute an F-box domain. Residues Leu61 to Met253 enclose the B30.2/SPRY domain.

This sequence belongs to the FBXO45/Fsn family. Component of an E3 ubiquitin ligase complex composed of hiw and Fsn.

It localises to the synapse. It participates in protein modification; protein ubiquitination. In terms of biological role, required in the presynaptic motoneuron to down-regulate the levels of wnd and restrain synaptic terminal growth at the neuromuscular junction (NMJ). This chain is F-box/SPRY domain-containing protein 1, found in Drosophila ananassae (Fruit fly).